A 1324-amino-acid polypeptide reads, in one-letter code: Probable phosphoribosylformylglycinamidine synthase (1324 aa).

ATP-binding positions include 314 to 325 (GATTGTGGRIRD), 394 to 396 (SGF), and Ala681. Residues Asp682, Glu721, Asn725, and Asp894 each coordinate Mg(2+). Ser896 serves as a coordination point for ATP. Residues 1053 to 1295 (RVAIIREEGS…LTWQWAESSE (243 aa)) enclose the Glutamine amidotransferase type-1 domain. Cys1146 (nucleophile) is an active-site residue. Residues His1280 and Asp1282 contribute to the active site.

This sequence in the N-terminal section; belongs to the FGAMS family.

It localises to the cytoplasm. The catalysed reaction is N(2)-formyl-N(1)-(5-phospho-beta-D-ribosyl)glycinamide + L-glutamine + ATP + H2O = 2-formamido-N(1)-(5-O-phospho-beta-D-ribosyl)acetamidine + L-glutamate + ADP + phosphate + H(+). The protein operates within purine metabolism; IMP biosynthesis via de novo pathway; 5-amino-1-(5-phospho-D-ribosyl)imidazole from N(2)-formyl-N(1)-(5-phospho-D-ribosyl)glycinamide: step 1/2. Functionally, phosphoribosylformylglycinamidine synthase involved in the purines biosynthetic pathway. Catalyzes the ATP-dependent conversion of formylglycinamide ribonucleotide (FGAR) and glutamine to yield formylglycinamidine ribonucleotide (FGAM) and glutamate. This is Probable phosphoribosylformylglycinamidine synthase from Caenorhabditis elegans.